The following is a 205-amino-acid chain: Lymphotoxin-alpha (205 aa).

An N-terminal signal peptide occupies residues 1–34; it reads MTPPERLFLPRVCGTTLHLLLLGLLLVLLPGAQG. T41 is a glycosylation site (O-linked (GalNAc...) threonine; partial). A THD domain is found at 63–205; the sequence is PAAHLIGDPS…STVFFGAFAL (143 aa). N-linked (GlcNAc...) asparagine glycosylation is present at N96.

The protein belongs to the tumor necrosis factor family. As to quaternary structure, homotrimer, and heterotrimer of either two LTB and one LTA subunits or (less prevalent) two LTA and one LTB subunits. Interacts with TNFRSF14.

It localises to the secreted. The protein localises to the membrane. Cytokine that in its homotrimeric form binds to TNFRSF1A/TNFR1, TNFRSF1B/TNFBR and TNFRSF14/HVEM. In its heterotrimeric form with LTB binds to TNFRSF3/LTBR. Lymphotoxin is produced by lymphocytes and is cytotoxic for a wide range of tumor cells in vitro and in vivo. In Homo sapiens (Human), this protein is Lymphotoxin-alpha (LTA).